Reading from the N-terminus, the 248-residue chain is Probable transcriptional regulatory protein M446_6579 (248 aa).

The protein belongs to the TACO1 family.

The protein resides in the cytoplasm. The chain is Probable transcriptional regulatory protein M446_6579 from Methylobacterium sp. (strain 4-46).